The following is a 198-amino-acid chain: Recombination protein RecR (198 aa).

A C4-type zinc finger spans residues 57 to 72 (CSLCGNLDTVDPCHIC). One can recognise a Toprim domain in the interval 80-175 (GLICVVETVG…TVTRVGHGVP (96 aa)).

Belongs to the RecR family.

Functionally, may play a role in DNA repair. It seems to be involved in an RecBC-independent recombinational process of DNA repair. It may act with RecF and RecO. The protein is Recombination protein RecR of Gluconobacter oxydans (strain 621H) (Gluconobacter suboxydans).